The sequence spans 430 residues: Bifunctional protein GlmU (430 aa).

Residues 1–227 (MISKTHTFVI…GEEATGINNR (227 aa)) are pyrophosphorylase. Residues Lys-25, Gln-74, 79–80 (GT), 104–106 (YGD), Gly-140, Glu-154, Asn-168, and Asn-225 each bind UDP-N-acetyl-alpha-D-glucosamine. A Mg(2+)-binding site is contributed by Asp-106. Mg(2+) is bound at residue Asn-225. Residues 228-248 (NDLIKAEFYFQENKRKIFTDS) form a linker region. An N-acetyltransferase region spans residues 249-430 (GVTLVAPETV…REKQVTKRIK (182 aa)). Residues Arg-314 and Lys-332 each coordinate UDP-N-acetyl-alpha-D-glucosamine. Residue His-344 is the Proton acceptor of the active site. UDP-N-acetyl-alpha-D-glucosamine is bound by residues Tyr-347 and Asn-358. Residues Ala-361, 367–368 (NY), Ala-404, and Arg-421 each bind acetyl-CoA.

This sequence in the N-terminal section; belongs to the N-acetylglucosamine-1-phosphate uridyltransferase family. In the C-terminal section; belongs to the transferase hexapeptide repeat family. Homotrimer. It depends on Mg(2+) as a cofactor.

It is found in the cytoplasm. The catalysed reaction is alpha-D-glucosamine 1-phosphate + acetyl-CoA = N-acetyl-alpha-D-glucosamine 1-phosphate + CoA + H(+). It catalyses the reaction N-acetyl-alpha-D-glucosamine 1-phosphate + UTP + H(+) = UDP-N-acetyl-alpha-D-glucosamine + diphosphate. Its pathway is nucleotide-sugar biosynthesis; UDP-N-acetyl-alpha-D-glucosamine biosynthesis; N-acetyl-alpha-D-glucosamine 1-phosphate from alpha-D-glucosamine 6-phosphate (route II): step 2/2. It participates in nucleotide-sugar biosynthesis; UDP-N-acetyl-alpha-D-glucosamine biosynthesis; UDP-N-acetyl-alpha-D-glucosamine from N-acetyl-alpha-D-glucosamine 1-phosphate: step 1/1. It functions in the pathway bacterial outer membrane biogenesis; LPS lipid A biosynthesis. Catalyzes the last two sequential reactions in the de novo biosynthetic pathway for UDP-N-acetylglucosamine (UDP-GlcNAc). The C-terminal domain catalyzes the transfer of acetyl group from acetyl coenzyme A to glucosamine-1-phosphate (GlcN-1-P) to produce N-acetylglucosamine-1-phosphate (GlcNAc-1-P), which is converted into UDP-GlcNAc by the transfer of uridine 5-monophosphate (from uridine 5-triphosphate), a reaction catalyzed by the N-terminal domain. The chain is Bifunctional protein GlmU from Wolbachia pipientis wMel.